The chain runs to 172 residues: Crossover junction endodeoxyribonuclease RuvC (172 aa).

Catalysis depends on residues D11, E71, and D143. Positions 11, 71, and 143 each coordinate Mg(2+).

The protein belongs to the RuvC family. In terms of assembly, homodimer which binds Holliday junction (HJ) DNA. The HJ becomes 2-fold symmetrical on binding to RuvC with unstacked arms; it has a different conformation from HJ DNA in complex with RuvA. In the full resolvosome a probable DNA-RuvA(4)-RuvB(12)-RuvC(2) complex forms which resolves the HJ. Mg(2+) is required as a cofactor.

The protein localises to the cytoplasm. The catalysed reaction is Endonucleolytic cleavage at a junction such as a reciprocal single-stranded crossover between two homologous DNA duplexes (Holliday junction).. Functionally, the RuvA-RuvB-RuvC complex processes Holliday junction (HJ) DNA during genetic recombination and DNA repair. Endonuclease that resolves HJ intermediates. Cleaves cruciform DNA by making single-stranded nicks across the HJ at symmetrical positions within the homologous arms, yielding a 5'-phosphate and a 3'-hydroxyl group; requires a central core of homology in the junction. The consensus cleavage sequence is 5'-(A/T)TT(C/G)-3'. Cleavage occurs on the 3'-side of the TT dinucleotide at the point of strand exchange. HJ branch migration catalyzed by RuvA-RuvB allows RuvC to scan DNA until it finds its consensus sequence, where it cleaves and resolves the cruciform DNA. This Brucella anthropi (strain ATCC 49188 / DSM 6882 / CCUG 24695 / JCM 21032 / LMG 3331 / NBRC 15819 / NCTC 12168 / Alc 37) (Ochrobactrum anthropi) protein is Crossover junction endodeoxyribonuclease RuvC.